Reading from the N-terminus, the 160-residue chain is Transcription elongation factor GreA (160 aa).

Positions 1–72 (MAEKTYPMTL…QISSLETKIR (72 aa)) form a coiled coil.

It belongs to the GreA/GreB family.

Necessary for efficient RNA polymerase transcription elongation past template-encoded arresting sites. The arresting sites in DNA have the property of trapping a certain fraction of elongating RNA polymerases that pass through, resulting in locked ternary complexes. Cleavage of the nascent transcript by cleavage factors such as GreA or GreB allows the resumption of elongation from the new 3'terminus. GreA releases sequences of 2 to 3 nucleotides. The polypeptide is Transcription elongation factor GreA (Streptococcus sanguinis (strain SK36)).